The sequence spans 860 residues: Protein translocase subunit SecA (860 aa).

ATP is bound by residues glutamine 87, 105 to 109, and aspartate 514; that span reads GEGKT. Positions 846, 848, 857, and 858 each coordinate Zn(2+).

Belongs to the SecA family. In terms of assembly, monomer and homodimer. Part of the essential Sec protein translocation apparatus which comprises SecA, SecYEG and auxiliary proteins SecDF. Other proteins may also be involved. Requires Zn(2+) as cofactor.

The protein localises to the cell membrane. It is found in the cytoplasm. The catalysed reaction is ATP + H2O + cellular proteinSide 1 = ADP + phosphate + cellular proteinSide 2.. In terms of biological role, part of the Sec protein translocase complex. Interacts with the SecYEG preprotein conducting channel. Has a central role in coupling the hydrolysis of ATP to the transfer of proteins into and across the cell membrane, serving as an ATP-driven molecular motor driving the stepwise translocation of polypeptide chains across the membrane. The chain is Protein translocase subunit SecA from Endomicrobium trichonymphae.